Reading from the N-terminus, the 209-residue chain is Uracil phosphoribosyltransferase (209 aa).

5-phospho-alpha-D-ribose 1-diphosphate-binding positions include arginine 79, arginine 104, and 131–139; that span reads TPVVATANT. Uracil contacts are provided by residues isoleucine 194 and 199–201; that span reads GDA. Aspartate 200 serves as a coordination point for 5-phospho-alpha-D-ribose 1-diphosphate.

The protein belongs to the UPRTase family. Mg(2+) is required as a cofactor.

The catalysed reaction is UMP + diphosphate = 5-phospho-alpha-D-ribose 1-diphosphate + uracil. It participates in pyrimidine metabolism; UMP biosynthesis via salvage pathway; UMP from uracil: step 1/1. Its activity is regulated as follows. Allosterically activated by GTP. Functionally, catalyzes the conversion of uracil and 5-phospho-alpha-D-ribose 1-diphosphate (PRPP) to UMP and diphosphate. This chain is Uracil phosphoribosyltransferase, found in Bradyrhizobium diazoefficiens (strain JCM 10833 / BCRC 13528 / IAM 13628 / NBRC 14792 / USDA 110).